Consider the following 221-residue polypeptide: Translation initiation factor 6 (221 aa).

This sequence belongs to the eIF-6 family.

Functionally, binds to the 50S ribosomal subunit and prevents its association with the 30S ribosomal subunit to form the 70S initiation complex. The polypeptide is Translation initiation factor 6 (Methanopyrus kandleri (strain AV19 / DSM 6324 / JCM 9639 / NBRC 100938)).